The primary structure comprises 158 residues: uncharacterized protein (158 aa).

Residues alanine 77–lysine 132 are disordered. The segment covering serine 100–lysine 120 has biased composition (basic residues).

This is an uncharacterized protein from Acanthamoeba polyphaga mimivirus (APMV).